Reading from the N-terminus, the 597-residue chain is 2-succinyl-5-enolpyruvyl-6-hydroxy-3-cyclohexene-1-carboxylate synthase (597 aa).

This sequence belongs to the TPP enzyme family. MenD subfamily. In terms of assembly, homodimer. Requires Mg(2+) as cofactor. Mn(2+) is required as a cofactor. Thiamine diphosphate serves as cofactor.

It carries out the reaction isochorismate + 2-oxoglutarate + H(+) = 5-enolpyruvoyl-6-hydroxy-2-succinyl-cyclohex-3-ene-1-carboxylate + CO2. Its pathway is quinol/quinone metabolism; 1,4-dihydroxy-2-naphthoate biosynthesis; 1,4-dihydroxy-2-naphthoate from chorismate: step 2/7. It functions in the pathway cofactor biosynthesis; phylloquinone biosynthesis. Functionally, catalyzes the thiamine diphosphate-dependent decarboxylation of 2-oxoglutarate and the subsequent addition of the resulting succinic semialdehyde-thiamine pyrophosphate anion to isochorismate to yield 2-succinyl-5-enolpyruvyl-6-hydroxy-3-cyclohexene-1-carboxylate (SEPHCHC). This is 2-succinyl-5-enolpyruvyl-6-hydroxy-3-cyclohexene-1-carboxylate synthase from Synechococcus sp. (strain JA-3-3Ab) (Cyanobacteria bacterium Yellowstone A-Prime).